The chain runs to 818 residues: MAKVASSGAEEALATIDGAPRRNVKKSEAFVMSGDVLISLNRNVSSTYAKLLGDQLPPGTTVASSIHPHQLSRATASAGVSFPSMNRNGAAAQKLSRLPVPVSTSQIERRGSLARKTSEESSPTAIRMLKTAPIERMESTDVEESEEETVMMTTDEKENQKKPNENDDEVMVVDEEQFIVVSNDMKSPNEEIVAKSLRSAMFTMPTDNHHHSYNSSPQISTLSPHLRSNGDGPSRSPVYDDVDDDLNGSLDAKDMSNNSHQQSFRSPENYSEKDTPSKHSVVTIDGSGVSNHYDQDGMFSHVYYSTQDTTPKHGSPSLRKQIFESRTTPNTAASNSSASASPSLHATSESRGATGGVSLRSAESSNLNQTAVPSTSTNSVGGEREAAQIARNLYELKNCTSTQVADRLNEQNEFSFLILVKYLELFQFSTTRIDAALREFLSRVELRGESSARERLLRVFSARYLECNPAIFDSLDEVHTLTCALLLLNSDLHGPNMGKKMTARDFITNIAHTGCTFKREMLKTLFQSIKDNAISLQNSAKNSTANGSVASTSRRQPQQIYEVDPDSVVEYYSGFLMRKYVRETDGGKTPFGRRSWRMVYARLRGLVLYFDTDEHPKATSRYASLENAVSLHHALAEPAPDYKKKSFVFRVRIAHGGEILFQTSNQKELQEWCEKINFVAAAFSSPTLPLPVTSKPETAPMPRLPRIPCLAPITKQLSTHEARVAELNEMIEIVSQSVSPNQPQQLITDRWVLLSFEKRRYSTYINVLRRSLEARKASSATTMNIMMTPTRRQQQNQKPVVSEDRLSYTDAVNGAAAH.

Disordered stretches follow at residues 92-123 (AQKLSRLPVPVSTSQIERRGSLARKTSEESSP), 137-168 (MESTDVEESEEETVMMTTDEKENQKKPNENDD), 208-291 (NHHH…GVSN), and 326-383 (RTTP…VGGE). Positions 107–119 (IERRGSLARKTSE) are enriched in basic and acidic residues. The segment covering 140–149 (TDVEESEEET) has biased composition (acidic residues). The span at 154–165 (TDEKENQKKPNE) shows a compositional bias: basic and acidic residues. 2 stretches are compositionally biased toward polar residues: residues 213–223 (YNSSPQISTLS) and 255–269 (MSNNSHQQSFRSPEN). A compositionally biased stretch (low complexity) spans 326–347 (RTTPNTAASNSSASASPSLHAT). Residues 356-532 (GVSLRSAESS…KTLFQSIKDN (177 aa)) form the SEC7 domain. Polar residues predominate over residues 361–380 (SAESSNLNQTAVPSTSTNSV). In terms of domain architecture, PH spans 569–681 (VEYYSGFLMR…WCEKINFVAA (113 aa)). The span at 782-799 (TMNIMMTPTRRQQQNQKP) shows a compositional bias: polar residues. Residues 782 to 818 (TMNIMMTPTRRQQQNQKPVVSEDRLSYTDAVNGAAAH) are disordered.

As to quaternary structure, interacts (via short N-terminal region) with microtubule-associated proteins tac-1 and zyg-8.

Its subcellular location is the cytoplasm. It localises to the cell cortex. It is found in the cell membrane. Functionally, guanine nucleotide exchange factor for arf-6. Involved in response to injury in mechanosensory neurons. Inhibits axon regrowth via microtubule dynamics, possibly by inducing axonal microtubule catastrophes. Limits microtubule growth near the cellular cortex of early embryonic cells. The polypeptide is Exchange factor for Arf-6 (Caenorhabditis elegans).